A 269-amino-acid polypeptide reads, in one-letter code: Tungstate-binding protein TupA (269 aa).

A signal peptide spans 1-17; that stretch reads MKKIISLALALALSASA.

As to quaternary structure, the complex is composed of two ATP-binding proteins (TupC), two transmembrane proteins (TupB) and a solute-binding protein (TupA).

The protein localises to the periplasm. Its function is as follows. Part of an ABC transporter complex involved in ultra-high affinity tungstate uptake. Specifically binds tungstate. The chain is Tungstate-binding protein TupA from Campylobacter jejuni subsp. jejuni serotype O:2 (strain ATCC 700819 / NCTC 11168).